The chain runs to 124 residues: MLVIFLGILGLLANQVLGLPIQAGGHLCSTDNPPQEELGYWCTYMESCKFCWECAHGICKNKVNESMPLIIENSYLTSCEVSRWYNQCTYGEGNGHYHVMDCSNPVPHNRPHQLRMKIYEKEDL.

Positions 1 to 28 (MLVIFLGILGLLANQVLGLPIQAGGHLC) are cleaved as a signal peptide. A glycan (N-linked (GlcNAc...) asparagine; by host) is linked at asparagine 64. A Prevents secretion from ER motif is present at residues 121–124 (KEDL).

Belongs to the asfivirus MGF 110 family.

It is found in the virion. The protein localises to the host endoplasmic reticulum-Golgi intermediate compartment. Its function is as follows. Causes the redistribution of lumenal ER protein to an enlarged ERGIC compartment. The protein is Protein MGF 110-4L of Ornithodoros (relapsing fever ticks).